The primary structure comprises 92 residues: Small ribosomal subunit protein uS19 (92 aa).

This sequence belongs to the universal ribosomal protein uS19 family.

In terms of biological role, protein S19 forms a complex with S13 that binds strongly to the 16S ribosomal RNA. This chain is Small ribosomal subunit protein uS19, found in Rhizobium etli (strain CIAT 652).